The sequence spans 368 residues: 4-hydroxy-3-methylbut-2-en-1-yl diphosphate synthase (flavodoxin) (368 aa).

[4Fe-4S] cluster is bound by residues Cys-268, Cys-271, Cys-303, and Glu-310.

Belongs to the IspG family. It depends on [4Fe-4S] cluster as a cofactor.

The enzyme catalyses (2E)-4-hydroxy-3-methylbut-2-enyl diphosphate + oxidized [flavodoxin] + H2O + 2 H(+) = 2-C-methyl-D-erythritol 2,4-cyclic diphosphate + reduced [flavodoxin]. It participates in isoprenoid biosynthesis; isopentenyl diphosphate biosynthesis via DXP pathway; isopentenyl diphosphate from 1-deoxy-D-xylulose 5-phosphate: step 5/6. In terms of biological role, converts 2C-methyl-D-erythritol 2,4-cyclodiphosphate (ME-2,4cPP) into 1-hydroxy-2-methyl-2-(E)-butenyl 4-diphosphate. The sequence is that of 4-hydroxy-3-methylbut-2-en-1-yl diphosphate synthase (flavodoxin) from Bacillus cytotoxicus (strain DSM 22905 / CIP 110041 / 391-98 / NVH 391-98).